The chain runs to 301 residues: Cell division control protein 2 homolog 1 (301 aa).

The 293-residue stretch at 5 to 297 folds into the Protein kinase domain; the sequence is YERLQKIGEG…AAQALEHPYF (293 aa). ATP contacts are provided by residues 11–19 and Lys-34; that span reads IGEGSYGVV. The residue at position 15 (Ser-15) is a Phosphoserine. Position 16 is a phosphotyrosine (Tyr-16). Residue Asp-127 is the Proton acceptor of the active site. The residue at position 160 (Thr-160) is a Phosphothreonine; by CAK.

It belongs to the protein kinase superfamily. CMGC Ser/Thr protein kinase family. CDC2/CDKX subfamily. Forms a stable but non-covalent complex with a regulatory subunit and with a cyclin.

It carries out the reaction L-seryl-[protein] + ATP = O-phospho-L-seryl-[protein] + ADP + H(+). The enzyme catalyses L-threonyl-[protein] + ATP = O-phospho-L-threonyl-[protein] + ADP + H(+). Phosphorylation at Ser-15 or Tyr-16 inactivates the enzyme, while phosphorylation at Thr-160 activates it. Probably involved in the control of the cell cycle. The protein is Cell division control protein 2 homolog 1 (CRK1) of Trypanosoma brucei brucei.